A 42-amino-acid chain; its full sequence is AATCTHWALIYFKTVQLFGWXHFNYQVDATYCPQFQPCMPXX.

In terms of assembly, heterodimer of an alpha and a beta chains; probably disulfide-linked. As to expression, expressed by the venom duct.

The protein resides in the secreted. Its function is as follows. Heterodimer: conodipine-M catalyzes the calcium-dependent hydrolysis of the 2-acyl groups in 3-sn-phosphoglycerides. This activity may be supported by the alpha chain. Conodipine-M inhibits the binding of isradipine (a ligand specific for L-type calcium channel) to L-type calcium channels. This chain is Conodipine-M beta chain, found in Conus magus (Magical cone).